The chain runs to 138 residues: Acyl carrier protein 1, chloroplastic (138 aa).

The N-terminal 56 residues, 1 to 56, are a transit peptide targeting the chloroplast; the sequence is MASLSATTTVRVQPSSSSLHKLSQGNGRCSSIVCLDWGKSSFPTLRTSRRRSFISA. The region spanning 59–134 is the Carrier domain; sequence KETIDKVCDI…QAADVIESLL (76 aa). At S94 the chain carries O-(pantetheine 4'-phosphoryl)serine.

The protein belongs to the acyl carrier protein (ACP) family. 4'-phosphopantetheine is transferred from CoA to a specific serine of apo-ACP by acpS. This modification is essential for activity because fatty acids are bound in thioester linkage to the sulfhydryl of the prosthetic group.

The protein localises to the plastid. Its subcellular location is the chloroplast. The protein operates within lipid metabolism; fatty acid biosynthesis. Functionally, carrier of the growing fatty acid chain in fatty acid biosynthesis. This chain is Acyl carrier protein 1, chloroplastic (ACL1.1), found in Spinacia oleracea (Spinach).